Reading from the N-terminus, the 582-residue chain is PX domain-containing protein kinase-like protein (582 aa).

One can recognise a PX domain in the interval 14–126; it reads LDDTVPLTAA…KFLDPNNYSA (113 aa). The Protein kinase domain maps to 88 to 481; that stretch reads FIAERQRGLQ…VENSEEQPVK (394 aa). The segment at 433–550 is disordered; that stretch reads EQKQIHQHRR…APFLPQPVNG (118 aa). Basic residues-rich tracts occupy residues 437–448 and 457–469; these read IHQHRRLTRAQS and KRRK…KSKR. Positions 483–514 are enriched in low complexity; it reads SNSNNSAGSGASSPLTSPSSPTPPSTAGLSSA. Pro residues predominate over residues 515-531; that stretch reads LPPPPPPPPPPPPPAGP. One can recognise a WH2 domain in the interval 548 to 567; that stretch reads VNGVNRGALLSSIQNFQKGT.

It belongs to the protein kinase superfamily. In terms of tissue distribution, isoform 1 is present in all tissues examined. Isoform 2 is found in all tissues except skeletal muscle and very low levels in spleen. Both isoforms are widely expressed throughout the nervous system however levels of isoform 2 are higher in purified hippocampal and cortical neurons whereas glial cells express more isoform 1 than isoform 2.

It localises to the cytoplasm. The protein resides in the cell membrane. Binds to and modulates brain Na,K-ATPase subunits ATP1B1 and ATP1B3 and may thereby participate in the regulation of electrical excitability and synaptic transmission. May not display kinase activity. This chain is PX domain-containing protein kinase-like protein, found in Mus musculus (Mouse).